Reading from the N-terminus, the 215-residue chain is NAD(P)H-quinone oxidoreductase subunit I (215 aa).

2 4Fe-4S ferredoxin-type domains span residues 55–84 (GRIHYEFDKCIACEVCVRVCPINLPVVDWV) and 95–124 (RNYSIDFGVCIFCGNCVEYCPTNCLSMTEE). [4Fe-4S] cluster-binding residues include Cys64, Cys67, Cys70, Cys74, Cys104, Cys107, Cys110, and Cys114. A compositionally biased stretch (basic and acidic residues) spans 169 to 180 (MDPHGVASDRPR). The interval 169–215 (MDPHGVASDRPRAGQLPAQVLETLTPPAKPTAKNDGQSSSEAKEGDA) is disordered.

The protein belongs to the complex I 23 kDa subunit family. In terms of assembly, NDH-1 is composed of at least 11 different subunits. [4Fe-4S] cluster serves as cofactor.

Its subcellular location is the cellular thylakoid membrane. The enzyme catalyses a plastoquinone + NADH + (n+1) H(+)(in) = a plastoquinol + NAD(+) + n H(+)(out). The catalysed reaction is a plastoquinone + NADPH + (n+1) H(+)(in) = a plastoquinol + NADP(+) + n H(+)(out). In terms of biological role, NDH-1 shuttles electrons from an unknown electron donor, via FMN and iron-sulfur (Fe-S) centers, to quinones in the respiratory and/or the photosynthetic chain. The immediate electron acceptor for the enzyme in this species is believed to be plastoquinone. Couples the redox reaction to proton translocation, and thus conserves the redox energy in a proton gradient. The protein is NAD(P)H-quinone oxidoreductase subunit I of Synechococcus sp. (strain CC9605).